Consider the following 176-residue polypeptide: Beta-carotene hydroxylase (176 aa).

The Fatty acid hydroxylase domain occupies 10 to 126 (LSVIAMEGIA…AHRLHHAVRG (117 aa)). Residues 152–176 (HGRPPKRDAAKDRPDAASPSSSSPE) are disordered. The segment covering 156 to 166 (PKRDAAKDRPD) has biased composition (basic and acidic residues). Low complexity predominate over residues 167-176 (AASPSSSSPE).

It belongs to the sterol desaturase family.

The protein operates within carotenoid biosynthesis; zeaxanthin biosynthesis. Functionally, catalyzes the hydroxylation reaction from beta-carotene to zeaxanthin. The protein is Beta-carotene hydroxylase (crtZ) of Pseudescherichia vulneris (Escherichia vulneris).